The sequence spans 568 residues: Urease subunit alpha (568 aa).

The region spanning 130–568 (GGIDTHIHFI…LPMAQRYFLF (439 aa)) is the Urease domain. 3 residues coordinate Ni(2+): His-135, His-137, and Lys-218. Lys-218 bears the N6-carboxylysine mark. Position 220 (His-220) interacts with substrate. Residues His-247 and His-273 each coordinate Ni(2+). Catalysis depends on His-321, which acts as the Proton donor. Position 361 (Asp-361) interacts with Ni(2+).

This sequence belongs to the metallo-dependent hydrolases superfamily. Urease alpha subunit family. Heterotrimer of UreA (gamma), UreB (beta) and UreC (alpha) subunits. Three heterotrimers associate to form the active enzyme. Ni cation is required as a cofactor. Carboxylation allows a single lysine to coordinate two nickel ions.

It localises to the cytoplasm. It carries out the reaction urea + 2 H2O + H(+) = hydrogencarbonate + 2 NH4(+). Its pathway is nitrogen metabolism; urea degradation; CO(2) and NH(3) from urea (urease route): step 1/1. This Burkholderia vietnamiensis (strain G4 / LMG 22486) (Burkholderia cepacia (strain R1808)) protein is Urease subunit alpha.